The chain runs to 347 residues: NADH-ubiquinone oxidoreductase chain 2 (347 aa).

The next 10 helical transmembrane spans lie at 4–21 (LILS…LIVM), 26–45 (WLMV…PVLM), 59–79 (YFLT…INLI), 96–116 (IIMT…FWVP), 122–142 (IQLS…MSIL), 148–168 (AINM…GGWG), 201–221 (ALLN…TFML), 242–262 (TTIL…GFLP), 274–294 (DSII…YFYM), and 326–346 (LPPL…LMLL).

The protein belongs to the complex I subunit 2 family. Core subunit of respiratory chain NADH dehydrogenase (Complex I) which is composed of 45 different subunits. Interacts with TMEM242.

It is found in the mitochondrion inner membrane. It carries out the reaction a ubiquinone + NADH + 5 H(+)(in) = a ubiquinol + NAD(+) + 4 H(+)(out). Core subunit of the mitochondrial membrane respiratory chain NADH dehydrogenase (Complex I) which catalyzes electron transfer from NADH through the respiratory chain, using ubiquinone as an electron acceptor. Essential for the catalytic activity and assembly of complex I. In Syconycteris australis (Southern blossom bat), this protein is NADH-ubiquinone oxidoreductase chain 2.